Reading from the N-terminus, the 345-residue chain is Selenide, water dikinase (345 aa).

The active site involves cysteine 15. ATP contacts are provided by residues lysine 18 and serine 46–aspartate 48. Aspartate 49 is a Mg(2+) binding site. ATP contacts are provided by residues aspartate 66, aspartate 89, and glycine 137 to serine 139. Residue aspartate 89 coordinates Mg(2+). Mg(2+) is bound at residue aspartate 225.

Belongs to the selenophosphate synthase 1 family. Class I subfamily. In terms of assembly, homodimer. Requires Mg(2+) as cofactor.

It catalyses the reaction hydrogenselenide + ATP + H2O = selenophosphate + AMP + phosphate + 2 H(+). Functionally, synthesizes selenophosphate from selenide and ATP. This chain is Selenide, water dikinase, found in Aeromonas hydrophila subsp. hydrophila (strain ATCC 7966 / DSM 30187 / BCRC 13018 / CCUG 14551 / JCM 1027 / KCTC 2358 / NCIMB 9240 / NCTC 8049).